Consider the following 255-residue polypeptide: Capsid protein (255 aa).

The short motif at 1–25 (MVQKRKDLRRSDAGSAVRAKLHKAS) is the Bipartite nuclear localization signal element.

This sequence belongs to the geminiviridae capsid protein family. Homomultimer. Interacts with the movement protein. Binds to single-stranded and double-stranded viral DNA.

The protein localises to the virion. It localises to the host nucleus. Functionally, encapsidates the viral genome into characteristic twinned ('geminate') particles. Binds the genomic viral ssDNA and shuttles it into and out of the cell nucleus. Plays a role in protection of the genome from degradation, virus acquisition and transmission by insect vectors, infectivity, and systemic movement. The CP of monopartite geminiviruses is absolutely essential for virus movement. This Miscanthus streak virus (isolate 91) (MiSV) protein is Capsid protein.